A 391-amino-acid polypeptide reads, in one-letter code: Formate-dependent phosphoribosylglycinamide formyltransferase (391 aa).

N(1)-(5-phospho-beta-D-ribosyl)glycinamide-binding positions include 20–21 (EL) and E80. ATP contacts are provided by residues R112, K153, 158 to 163 (SSGKGQ), 193 to 196 (EGFV), and E201. The region spanning 117-306 (RLAAEELGLP…EFALHVRAFT (190 aa)) is the ATP-grasp domain. E265 and E277 together coordinate Mg(2+). Residues D284, K354, and 361-362 (RR) each bind N(1)-(5-phospho-beta-D-ribosyl)glycinamide.

It belongs to the PurK/PurT family. In terms of assembly, homodimer.

The catalysed reaction is N(1)-(5-phospho-beta-D-ribosyl)glycinamide + formate + ATP = N(2)-formyl-N(1)-(5-phospho-beta-D-ribosyl)glycinamide + ADP + phosphate + H(+). It functions in the pathway purine metabolism; IMP biosynthesis via de novo pathway; N(2)-formyl-N(1)-(5-phospho-D-ribosyl)glycinamide from N(1)-(5-phospho-D-ribosyl)glycinamide (formate route): step 1/1. In terms of biological role, involved in the de novo purine biosynthesis. Catalyzes the transfer of formate to 5-phospho-ribosyl-glycinamide (GAR), producing 5-phospho-ribosyl-N-formylglycinamide (FGAR). Formate is provided by PurU via hydrolysis of 10-formyl-tetrahydrofolate. The chain is Formate-dependent phosphoribosylglycinamide formyltransferase from Vibrio cholerae serotype O1 (strain ATCC 39315 / El Tor Inaba N16961).